A 610-amino-acid chain; its full sequence is UvrABC system protein C (610 aa).

The GIY-YIG domain occupies 16–94 (NQPGVYRMYN…IKQYLPKYNV (79 aa)). The UVR domain maps to 204–239 (NQVLSILVEKMEQASRELRFEDAAKARDQIQAIRRV).

It belongs to the UvrC family. In terms of assembly, interacts with UvrB in an incision complex.

It is found in the cytoplasm. Its function is as follows. The UvrABC repair system catalyzes the recognition and processing of DNA lesions. UvrC both incises the 5' and 3' sides of the lesion. The N-terminal half is responsible for the 3' incision and the C-terminal half is responsible for the 5' incision. The chain is UvrABC system protein C from Vibrio cholerae serotype O1 (strain ATCC 39315 / El Tor Inaba N16961).